Reading from the N-terminus, the 1571-residue chain is Pentafunctional AROM polypeptide 2 (1571 aa).

The interval 1 to 380 is 3-dehydroquinate synthase; it reads MAEPTKISIL…YEPKASVVSN (380 aa). NAD(+) contacts are provided by residues 44-46, 81-84, 112-114, and aspartate 117; these read DTN, ENSK, and GGV. Arginine 128 contacts 7-phospho-2-dehydro-3-deoxy-D-arabino-heptonate. 137–138 is a binding site for NAD(+); the sequence is TT. Residues aspartate 144 and lysine 150 each contribute to the 7-phospho-2-dehydro-3-deoxy-D-arabino-heptonate site. Lysine 159 contacts NAD(+). Asparagine 160 is a 7-phospho-2-dehydro-3-deoxy-D-arabino-heptonate binding site. Residues 177-180 and asparagine 188 contribute to the NAD(+) site; that span reads FIDT. Glutamate 192 provides a ligand contact to Zn(2+). 7-phospho-2-dehydro-3-deoxy-D-arabino-heptonate is bound by residues 192-195 and lysine 246; that span reads EVIK. Glutamate 256 acts as the Proton acceptor; for 3-dehydroquinate synthase activity in catalysis. 7-phospho-2-dehydro-3-deoxy-D-arabino-heptonate-binding positions include 260 to 264 and histidine 267; that span reads RNLLN. Histidine 267 serves as a coordination point for Zn(2+). Histidine 271 serves as the catalytic Proton acceptor; for 3-dehydroquinate synthase activity. 7-phospho-2-dehydro-3-deoxy-D-arabino-heptonate is bound by residues histidine 283 and lysine 352. Histidine 283 contacts Zn(2+). The interval 393-838 is EPSP synthase; the sequence is VIPGVPKNLN…WDALKQKFGV (446 aa). Cysteine 820 (for EPSP synthase activity) is an active-site residue. The tract at residues 859–1051 is shikimate kinase; sequence NASIIIIGMR…RKKHLSFFVS (193 aa). 866-873 contacts ATP; sequence GMRGAGKT. Residues 1052-1273 form a 3-dehydroquinase region; that stretch reads LTLPDLRESG…AAPGQLSAAE (222 aa). Catalysis depends on histidine 1175, which acts as the Proton acceptor; for 3-dehydroquinate dehydratase activity. Lysine 1203 functions as the Schiff-base intermediate with substrate; for 3-dehydroquinate dehydratase activity in the catalytic mechanism. Residues 1286 to 1571 form a shikimate dehydrogenase region; that stretch reads AKKFAVLGKP…NAVLGTNETK (286 aa).

It in the N-terminal section; belongs to the sugar phosphate cyclases superfamily. Dehydroquinate synthase family. The protein in the 2nd section; belongs to the EPSP synthase family. In the 3rd section; belongs to the shikimate kinase family. This sequence in the 4th section; belongs to the type-I 3-dehydroquinase family. It in the C-terminal section; belongs to the shikimate dehydrogenase family. In terms of assembly, homodimer. It depends on Zn(2+) as a cofactor.

It is found in the cytoplasm. It catalyses the reaction 7-phospho-2-dehydro-3-deoxy-D-arabino-heptonate = 3-dehydroquinate + phosphate. The enzyme catalyses 3-dehydroquinate = 3-dehydroshikimate + H2O. The catalysed reaction is shikimate + NADP(+) = 3-dehydroshikimate + NADPH + H(+). It carries out the reaction shikimate + ATP = 3-phosphoshikimate + ADP + H(+). It catalyses the reaction 3-phosphoshikimate + phosphoenolpyruvate = 5-O-(1-carboxyvinyl)-3-phosphoshikimate + phosphate. Its pathway is metabolic intermediate biosynthesis; chorismate biosynthesis; chorismate from D-erythrose 4-phosphate and phosphoenolpyruvate: step 2/7. The protein operates within metabolic intermediate biosynthesis; chorismate biosynthesis; chorismate from D-erythrose 4-phosphate and phosphoenolpyruvate: step 3/7. It functions in the pathway metabolic intermediate biosynthesis; chorismate biosynthesis; chorismate from D-erythrose 4-phosphate and phosphoenolpyruvate: step 4/7. It participates in metabolic intermediate biosynthesis; chorismate biosynthesis; chorismate from D-erythrose 4-phosphate and phosphoenolpyruvate: step 5/7. Its pathway is metabolic intermediate biosynthesis; chorismate biosynthesis; chorismate from D-erythrose 4-phosphate and phosphoenolpyruvate: step 6/7. Functionally, the AROM polypeptide catalyzes 5 consecutive enzymatic reactions in prechorismate polyaromatic amino acid biosynthesis. This is Pentafunctional AROM polypeptide 2 from Talaromyces marneffei (strain ATCC 18224 / CBS 334.59 / QM 7333) (Penicillium marneffei).